Consider the following 132-residue polypeptide: Large ribosomal subunit protein bL17 (132 aa).

It belongs to the bacterial ribosomal protein bL17 family. In terms of assembly, part of the 50S ribosomal subunit. Contacts protein L32.

The protein is Large ribosomal subunit protein bL17 of Ehrlichia canis (strain Jake).